A 404-amino-acid polypeptide reads, in one-letter code: Multidrug resistance protein MdtH (404 aa).

Residues 1–12 (MSRVSQARNLGK) lie on the Cytoplasmic side of the membrane. A helical membrane pass occupies residues 13 to 33 (YFLLIDNMLVVLGFFVVFPLI). Topologically, residues 34–98 (SIRFVDQMGW…GFATMGIAHE (65 aa)) are periplasmic. A helical membrane pass occupies residues 99 to 116 (PWLLWFSCFLSGLGGTLF). Residues 117-138 (DPPRSALVVKLIRPEQRGRFFS) are Cytoplasmic-facing. The chain crosses the membrane as a helical span at residues 139–159 (LLMMQDSAGAVIGALLGSWLL). Over 160-164 (QYDFR) the chain is Periplasmic. A helical membrane pass occupies residues 165–185 (LVCAMGAILFIVCAIFNAWLL). At 186 to 213 (PAWKLSTVRTPVREGMRRVISDKRFVTY) the chain is on the cytoplasmic side. Residues 214–234 (VLTLAGYYMLAVQVMLMLPIM) form a helical membrane-spanning segment. Topologically, residues 235–243 (VNDVAGSPA) are periplasmic. The helical transmembrane segment at 244-264 (AVKWMYAIEACLSLTLLYPIA) threads the bilayer. Topologically, residues 265–276 (RWSEKRFRLEHR) are cytoplasmic. Residues 277-297 (LMAGLLIMSLSMIPIGLAGNL) traverse the membrane as a helical segment. The Periplasmic portion of the chain corresponds to 298–299 (QQ). Residues 300–320 (LFTLICAFYIGSVIAEPARET) form a helical membrane-spanning segment. At 321-339 (LSASLTDARARGSYMGFSR) the chain is on the cytoplasmic side. The chain crosses the membrane as a helical span at residues 340–360 (LGLAIGGAIGYIGGGWLFDMG). Residues 361–367 (KTLAQPE) are Periplasmic-facing. A helical membrane pass occupies residues 368–388 (LPWMMLGIIGFITFLALGWQF). The Cytoplasmic portion of the chain corresponds to 389–404 (SHKRTPRQYTGARRLI).

This sequence belongs to the major facilitator superfamily. DHA1 family. MdtH (TC 2.A.1.2.21) subfamily.

The protein localises to the cell inner membrane. This Salmonella arizonae (strain ATCC BAA-731 / CDC346-86 / RSK2980) protein is Multidrug resistance protein MdtH.